A 218-amino-acid polypeptide reads, in one-letter code: Cytochrome b6 (218 aa).

A helical membrane pass occupies residues 35 to 55; it reads IFYCLGGITLVCFLIQFATGF. Cys38 is a binding site for heme c. The heme b site is built by His89 and His103. 3 helical membrane-spanning segments follow: residues 93 to 113, 119 to 139, and 189 to 209; these read ASMM…TGGF, LTWV…VTGY, and LHTF…FLMI. 2 residues coordinate heme b: His190 and His205.

This sequence belongs to the cytochrome b family. PetB subfamily. As to quaternary structure, the 4 large subunits of the cytochrome b6-f complex are cytochrome b6, subunit IV (17 kDa polypeptide, PetD), cytochrome f and the Rieske protein, while the 4 small subunits are PetG, PetL, PetM and PetN. The complex functions as a dimer. Heme b is required as a cofactor. Requires heme c as cofactor.

The protein resides in the cellular thylakoid membrane. In terms of biological role, component of the cytochrome b6-f complex, which mediates electron transfer between photosystem II (PSII) and photosystem I (PSI), cyclic electron flow around PSI, and state transitions. This Synechococcus sp. (strain CC9902) protein is Cytochrome b6.